Here is a 283-residue protein sequence, read N- to C-terminus: MPELPEVETVRRGLTPAMEGVVIARADVNRPDLRWPFPADMAARLTGKRVERLRRRSKYILMDLDSGETLLVHLGMSGRMLVSGDPLGQFVHSHPAPEKHDHVVFHMANNARITFNDPRRFGAMDLMETASADTHKLLSVLGPEPLGNDFHESHLIEAFKNRNSPVKSVLLDQRIVSGLGNIYVCEALFRAKIHPIRKAGKISGARVATLVPIIREVLAEAIEAGGSSLRDFKQADGELGYFQHSFDVYGREGAPCKGEGCTGQIKRIVQSGRSSFYCAQCQR.

Pro-2 functions as the Schiff-base intermediate with DNA in the catalytic mechanism. Glu-3 acts as the Proton donor in catalysis. Lys-58 acts as the Proton donor; for beta-elimination activity in catalysis. Residues His-100, Arg-119, and Arg-162 each coordinate DNA. The segment at 247–283 (DVYGREGAPCKGEGCTGQIKRIVQSGRSSFYCAQCQR) adopts an FPG-type zinc-finger fold. Catalysis depends on Arg-273, which acts as the Proton donor; for delta-elimination activity.

Belongs to the FPG family. Monomer. The cofactor is Zn(2+).

The enzyme catalyses Hydrolysis of DNA containing ring-opened 7-methylguanine residues, releasing 2,6-diamino-4-hydroxy-5-(N-methyl)formamidopyrimidine.. It catalyses the reaction 2'-deoxyribonucleotide-(2'-deoxyribose 5'-phosphate)-2'-deoxyribonucleotide-DNA = a 3'-end 2'-deoxyribonucleotide-(2,3-dehydro-2,3-deoxyribose 5'-phosphate)-DNA + a 5'-end 5'-phospho-2'-deoxyribonucleoside-DNA + H(+). In terms of biological role, involved in base excision repair of DNA damaged by oxidation or by mutagenic agents. Acts as a DNA glycosylase that recognizes and removes damaged bases. Has a preference for oxidized purines, such as 7,8-dihydro-8-oxoguanine (8-oxoG). Has AP (apurinic/apyrimidinic) lyase activity and introduces nicks in the DNA strand. Cleaves the DNA backbone by beta-delta elimination to generate a single-strand break at the site of the removed base with both 3'- and 5'-phosphates. In Roseobacter denitrificans (strain ATCC 33942 / OCh 114) (Erythrobacter sp. (strain OCh 114)), this protein is Formamidopyrimidine-DNA glycosylase.